Reading from the N-terminus, the 464-residue chain is L-cysteine desulfhydrase-like protein lolT2 (464 aa).

An N6-(pyridoxal phosphate)lysine modification is found at lysine 227.

Belongs to the class-V pyridoxal-phosphate-dependent aminotransferase family. It depends on pyridoxal 5'-phosphate as a cofactor.

Its pathway is alkaloid biosynthesis. Functionally, L-cysteine desulfhydrase-like protein; part of the gene cluster that mediates the biosynthesis of loline alkaloids, potent insecticidal agents composed of a pyrrolizidine ring system and an uncommon ether bridge linking carbons 2 and 7. Lolines are structurally differentiated by the various modifications of the L-amino group and include norloline, loline, N-methylloline, N-acetylloline, N-acetylnorloline, and N-formylloline. The first committed step is the condensation of O-acetyl-L-homoserine (derived from L-aspartic acid) and L-proline, probably catalyzed by the gamma-type pyridoxal 5'-phosphate(PLP)-dependent enzyme lolC, to give the diamino diacid, NACPP. Ensuing cyclization, decarboxylation, and acetylation steps yield 1-exo-acetamidopyrrolizidine (AcAP). LolO is required for installation of the ether bridge upon the pathway intermediate, 1-exo-acetamidopyrrolizidine (AcAP). In sequential 2-oxoglutarate- and O(2)-consuming steps, lolO removes hydrogens from C2 and C7 of AcAP to form both carbon-oxygen bonds in N-acetylnorloline (NANL), the precursor to all other lolines. The enzymes lolD, lolE, lolF and lolT have also been proposed to be involved in the ether-bridge installation. Further processing of the exocyclic moiety of NANL by fungal N-acetamidase (LolN), methyltransferase (LolM), and cytochrome P450 (LolP) enzymes, with occasional involvement of a plant acetyltransferase, generates the other known lolines. LolN transforms NANL to norlonine which is monomethylated and dimethylated to respectively lonine and N-methyllonine (NML) by lolM. LolP catalyzes hydroxylation of the methyl group in N-methylloline (NML) and further oxygenation to N-formylloline (NFL). A plant acetyltransferase is responsible for the acetylation of loline to form N-acetylloline (NAL). LolA might interact with aspartate kinase to prevent feedback inhibition of its activity by these end products and thereby promote production of L-homoserine from L-aspartate. The polypeptide is L-cysteine desulfhydrase-like protein lolT2 (Epichloe uncinata (Endophyte fungus)).